Here is a 161-residue protein sequence, read N- to C-terminus: Allophycocyanin beta chain (161 aa).

An N4-methylasparagine modification is found at asparagine 71. Cysteine 81 serves as a coordination point for (2R,3E)-phycocyanobilin.

Belongs to the phycobiliprotein family. In terms of assembly, heterodimer of an alpha and a beta chain. In terms of processing, contains one covalently linked phycocyanobilin chromophore.

The protein resides in the cellular thylakoid membrane. Its function is as follows. Light-harvesting photosynthetic bile pigment-protein from the phycobiliprotein complex. Allophycocyanin has a maximum absorption at approximately 650 nanometers. The protein is Allophycocyanin beta chain (apcB) of Anabaena cylindrica.